We begin with the raw amino-acid sequence, 249 residues long: Small ribosomal subunit protein uS2 (249 aa).

This sequence belongs to the universal ribosomal protein uS2 family.

This Polynucleobacter necessarius subsp. necessarius (strain STIR1) protein is Small ribosomal subunit protein uS2.